We begin with the raw amino-acid sequence, 257 residues long: Small ribosomal subunit protein eS1 (257 aa).

Residues 237-257 (GADGEKVDRPDDYEPPVQQEV) are disordered. Residues 239–248 (DGEKVDRPDD) show a composition bias toward basic and acidic residues.

It belongs to the eukaryotic ribosomal protein eS1 family. In terms of assembly, component of the small ribosomal subunit. Mature ribosomes consist of a small (40S) and a large (60S) subunit. The 40S subunit contains about 33 different proteins and 1 molecule of RNA (18S). The 60S subunit contains about 49 different proteins and 3 molecules of RNA (28S, 5.8S and 5S).

The protein localises to the cytoplasm. This Caenorhabditis elegans protein is Small ribosomal subunit protein eS1.